We begin with the raw amino-acid sequence, 252 residues long: uncharacterized protein (252 aa).

The helical transmembrane segment at 80 to 100 (LSVLVIGSTMFTHAGVLPVLA) threads the bilayer.

It localises to the host membrane. Its subcellular location is the virion. This is an uncharacterized protein from Acanthamoeba polyphaga mimivirus (APMV).